The chain runs to 474 residues: 6-phospho-beta-galactosidase (474 aa).

Gln19, His116, Asn159, Glu160, and Asn297 together coordinate D-galactose 6-phosphate. The Proton donor role is filled by Glu160. Glu375 acts as the Nucleophile in catalysis. D-galactose 6-phosphate contacts are provided by Ser433, Trp434, Lys440, and Tyr442.

Belongs to the glycosyl hydrolase 1 family.

The enzyme catalyses a 6-phospho-beta-D-galactoside + H2O = D-galactose 6-phosphate + an alcohol. It functions in the pathway carbohydrate metabolism; lactose degradation; D-galactose 6-phosphate and beta-D-glucose from lactose 6-phosphate: step 1/1. In Lacticaseibacillus rhamnosus (Lactobacillus rhamnosus), this protein is 6-phospho-beta-galactosidase.